The following is a 1495-amino-acid chain: Collagen alpha-1(XVII) chain (1495 aa).

Residues 1 to 17 (MDSVTKKTRQDGSEVTE) show a composition bias toward basic and acidic residues. The disordered stretch occupies residues 1–138 (MDSVTKKTRQ…VRLQSASPSG (138 aa)). Topologically, residues 1-435 (MDSVTKKTRQ…CGSCCSWWKW (435 aa)) are cytoplasmic. Residues 1-535 (MDSVTKKTRQ…IERGYFRGER (535 aa)) are nonhelical region (NC16). The segment covering 19 to 32 (QGGSSSGLKTSSHT) has biased composition (polar residues). A compositionally biased stretch (low complexity) spans 51–63 (SSGSGRLNSSSSG). Polar residues-rich tracts occupy residues 64 to 80 (YRQTQSPSSTLTKSPGS) and 95 to 104 (EGSSSANSSP). Residues 436 to 456 (LLGLLLAWLLLLGLLFGLIAL) traverse the membrane as a helical; Signal-anchor for type II membrane protein segment. Topologically, residues 457 to 1495 (AEEVRKLKSR…GRRRRRSVGV (1039 aa)) are extracellular. Disordered stretches follow at residues 532 to 824 (RGER…EKGS), 847 to 999 (DLQG…SSSQ), 1160 to 1185 (EFSGLVGPPGPAGPPGPPGIPGSSGI), 1201 to 1226 (SISGIQGPPGPPGPPGPPGFSGTGLL), 1251 to 1278 (RSYISGPPGPPGPRGPPGPKGDSGLVAG), 1295 to 1336 (GGSI…GSYG), and 1396 to 1416 (MSYTGQGPPGPPGPPGPPGIS). Residues 536–1482 (GEPGMKGDMG…KGEKGEKGEQ (947 aa)) are triple-helical region. 2 stretches are compositionally biased toward low complexity: residues 702–711 (PGAKGPAGQA) and 761–773 (RPGAKGEPGAPGK). Residues 786 to 807 (PGPPGPPGPIGPTGPPGVPGPV) show a composition bias toward pro residues. Positions 809–818 (PAGLPGQQGP) are enriched in low complexity. 7 stretches are compositionally biased toward pro residues: residues 871–886 (PRGPPGLPGPSGPPGR), 901–910 (PPGPPGPPGP), 946–955 (PPGPPGPPGP), 981–993 (PPGPPGPPGPPGP), 1167–1179 (PPGPAGPPGPPGI), 1208–1218 (PPGPPGPPGPP), and 1257–1269 (PPGPPGPRGPPGP). A compositionally biased stretch (gly residues) spans 1296 to 1308 (GSIGAEGSHGGSL). Positions 1309–1336 (GASSSYGSSMSSSMSSYSASMGSDGSYG) are enriched in low complexity. Residues 1403 to 1413 (PPGPPGPPGPP) are compositionally biased toward pro residues. A glycan (N-linked (GlcNAc...) asparagine) is linked at asparagine 1424. Positions 1435 to 1495 (THGTVRGPPG…GRRRRRSVGV (61 aa)) are disordered. The span at 1472–1481 (PKGEKGEKGE) shows a compositional bias: basic and acidic residues. Positions 1483–1495 (MYSGRRRRRSVGV) are nonhelical region (NC1). Over residues 1486-1495 (GRRRRRSVGV) the composition is skewed to basic residues.

In terms of assembly, homotrimers of alpha 1(XVII)chains. In terms of processing, the intracellular/endo domain is disulfide-linked. Prolines at the third position of the tripeptide repeating unit (G-X-Y) are hydroxylated in some or all of the chains. Post-translationally, the ectodomain is shedded from the surface of keratinocytes resulting in a 120-kDa soluble form, also named as 120 kDa linear IgA disease antigen homolog. The shedding is mediated by membrane-bound metalloproteases. Cornea specific.

The protein localises to the cell junction. It localises to the hemidesmosome. The protein resides in the membrane. It is found in the secreted. Its subcellular location is the extracellular space. The protein localises to the extracellular matrix. It localises to the basement membrane. Its function is as follows. May play a role in the integrity of hemidesmosome and the attachment of basal keratinocytes to the underlying basement membrane. Functionally, the 120 kDa linear IgA disease antigen homolog is an anchoring filament component involved in dermal-epidermal cohesion. The protein is Collagen alpha-1(XVII) chain (COL17A1) of Gallus gallus (Chicken).